Consider the following 263-residue polypeptide: Isatin hydrolase (263 aa).

Residue 62 to 66 coordinates substrate; sequence FFAWN. Mn(2+)-binding residues include His-73, His-77, and Asp-79. His-83 acts as the Proton donor/acceptor in catalysis. Position 212 (His-212) interacts with substrate.

The protein belongs to the Cyclase 1 superfamily. As to quaternary structure, homodimer. The cofactor is Mn(2+).

It catalyses the reaction isatin + H2O = isatinate + H(+). With respect to regulation, inhibited by thioisatinate. Its function is as follows. Involved in the degradation of the plant hormone indole-3-acetic acid (IAA). Catalyzes the hydrolysis of the cyclic amide bond (lactam) of isatin (1H-indole-2,3-dione) to yield isatinate (2-(2-aminophenyl)-2-oxoacetate). The polypeptide is Isatin hydrolase (Roseibium aggregatum (strain ATCC 25650 / DSM 13394 / JCM 20685 / NBRC 16684 / NCIMB 2208 / IAM 12614 / B1) (Stappia aggregata)).